The chain runs to 195 residues: MKKKVLAIALVTAFTGMGVAQAADVTAQAVATWSATAKKDTTSKLVVTPLGSLAFQYAEGIKGFNSQKGLFDVAIEGDTTATAFKLTSRLITNTLTQLDTSGSTLSVGVDYNGAAVEKTGDTVMIDTANNIMGGNLSALANGYNASGRTTAQDGFTFSIISGTTNGTTAVTDYSTLPEGIWSGDVSVQFDATWTS.

A signal peptide spans 1–22 (MKKKVLAIALVTAFTGMGVAQA).

This sequence belongs to the EcpA/MatB fimbrillin family. Self-associates. Forms filaments. Interacts with EcpD.

The protein resides in the fimbrium. Part of the ecpRABCDE operon, which encodes the E.coli common pilus (ECP). ECP plays a dual role in early-stage biofilm development and host cell recognition. Major subunit of the fimbria. The protein is Common pilus major fimbrillin subunit EcpA (ecpA) of Klebsiella pneumoniae subsp. pneumoniae (strain ATCC 700721 / MGH 78578).